Consider the following 207-residue polypeptide: Ribonuclease HII (207 aa).

The 190-residue stretch at 12–201 folds into the RNase H type-2 domain; sequence DLVAGVDEVG…VRAAWEVREG (190 aa). 3 residues coordinate a divalent metal cation: Asp-18, Glu-19, and Asp-110.

This sequence belongs to the RNase HII family. Mn(2+) serves as cofactor. Mg(2+) is required as a cofactor.

The protein localises to the cytoplasm. It catalyses the reaction Endonucleolytic cleavage to 5'-phosphomonoester.. Endonuclease that specifically degrades the RNA of RNA-DNA hybrids. In Pseudomonas putida (strain ATCC 700007 / DSM 6899 / JCM 31910 / BCRC 17059 / LMG 24140 / F1), this protein is Ribonuclease HII.